The chain runs to 177 residues: Large ribosomal subunit protein uL6 (177 aa).

It belongs to the universal ribosomal protein uL6 family. As to quaternary structure, part of the 50S ribosomal subunit.

This protein binds to the 23S rRNA, and is important in its secondary structure. It is located near the subunit interface in the base of the L7/L12 stalk, and near the tRNA binding site of the peptidyltransferase center. The protein is Large ribosomal subunit protein uL6 of Pectobacterium carotovorum subsp. carotovorum (strain PC1).